Reading from the N-terminus, the 128-residue chain is Sulfurtransferase TusD (128 aa).

The Cysteine persulfide intermediate role is filled by Cys-78.

This sequence belongs to the DsrE/TusD family. In terms of assembly, heterohexamer, formed by a dimer of trimers. The hexameric TusBCD complex contains 2 copies each of TusB, TusC and TusD. The TusBCD complex interacts with TusE.

It is found in the cytoplasm. In terms of biological role, part of a sulfur-relay system required for 2-thiolation of 5-methylaminomethyl-2-thiouridine (mnm(5)s(2)U) at tRNA wobble positions. Accepts sulfur from TusA and transfers it in turn to TusE. The protein is Sulfurtransferase TusD of Escherichia coli O45:K1 (strain S88 / ExPEC).